A 225-amino-acid polypeptide reads, in one-letter code: 2-C-methyl-D-erythritol 4-phosphate cytidylyltransferase (225 aa).

It belongs to the IspD/TarI cytidylyltransferase family. IspD subfamily.

It catalyses the reaction 2-C-methyl-D-erythritol 4-phosphate + CTP + H(+) = 4-CDP-2-C-methyl-D-erythritol + diphosphate. It functions in the pathway isoprenoid biosynthesis; isopentenyl diphosphate biosynthesis via DXP pathway; isopentenyl diphosphate from 1-deoxy-D-xylulose 5-phosphate: step 2/6. In terms of biological role, catalyzes the formation of 4-diphosphocytidyl-2-C-methyl-D-erythritol from CTP and 2-C-methyl-D-erythritol 4-phosphate (MEP). The sequence is that of 2-C-methyl-D-erythritol 4-phosphate cytidylyltransferase from Prochlorococcus marinus (strain MIT 9313).